The following is a 508-amino-acid chain: Photosystem II CP47 reaction center protein (508 aa).

6 helical membrane passes run 21-36 (AVHIMHTALVAGWAGS), 101-115 (IVFSGLCFLSAIWHW), 140-156 (GIHLFLSGVACFGFGAF), 203-218 (IAAGLLGIIAGLFHLS), 237-252 (VLSSSIAAVFFAAFIV), and 457-472 (TFALLFFFGHIWHGAR).

It belongs to the PsbB/PsbC family. PsbB subfamily. In terms of assembly, PSII is composed of 1 copy each of membrane proteins PsbA, PsbB, PsbC, PsbD, PsbE, PsbF, PsbH, PsbI, PsbJ, PsbK, PsbL, PsbM, PsbT, PsbX, PsbY, PsbZ, Psb30/Ycf12, at least 3 peripheral proteins of the oxygen-evolving complex and a large number of cofactors. It forms dimeric complexes. Requires Binds multiple chlorophylls. PSII binds additional chlorophylls, carotenoids and specific lipids. as cofactor.

It is found in the plastid. The protein resides in the chloroplast thylakoid membrane. One of the components of the core complex of photosystem II (PSII). It binds chlorophyll and helps catalyze the primary light-induced photochemical processes of PSII. PSII is a light-driven water:plastoquinone oxidoreductase, using light energy to abstract electrons from H(2)O, generating O(2) and a proton gradient subsequently used for ATP formation. In Gnetum parvifolium (Small-leaved jointfir), this protein is Photosystem II CP47 reaction center protein.